The primary structure comprises 428 residues: Glutamate-1-semialdehyde 2,1-aminomutase (428 aa).

Lysine 267 is modified (N6-(pyridoxal phosphate)lysine).

It belongs to the class-III pyridoxal-phosphate-dependent aminotransferase family. HemL subfamily. In terms of assembly, homodimer. It depends on pyridoxal 5'-phosphate as a cofactor.

It localises to the cytoplasm. The catalysed reaction is (S)-4-amino-5-oxopentanoate = 5-aminolevulinate. Its pathway is porphyrin-containing compound metabolism; protoporphyrin-IX biosynthesis; 5-aminolevulinate from L-glutamyl-tRNA(Glu): step 2/2. The chain is Glutamate-1-semialdehyde 2,1-aminomutase from Trichlorobacter lovleyi (strain ATCC BAA-1151 / DSM 17278 / SZ) (Geobacter lovleyi).